The following is a 1140-amino-acid chain: Centrosomal protein of 135 kDa (1140 aa).

Positions 11-64 (NIRKRLDQLGYRQTLTVECLPLVEKLFSDLVHTTESLRQSKLSAVKAEKESANF) are homodimerization. 2 coiled-coil regions span residues 75–151 (NARL…KNLH) and 199–416 (LQVA…FAVT). Phosphoserine occurs at positions 383 and 439. 3 coiled-coil regions span residues 447–644 (LKGI…LENK), 668–1036 (SLRI…LESL), and 1079–1113 (NTMLRAKVAQLQTDYDALKRQISTERYERERAIQE). Residue Ser-688 is modified to Phosphoserine. The disordered stretch occupies residues 1114 to 1140 (MRRHGLATPPLSSTLRSPSHSPEHRNV). A Phosphothreonine modification is found at Thr-1121. The span at 1121–1133 (TPPLSSTLRSPSH) shows a compositional bias: low complexity. Ser-1130 is subject to Phosphoserine.

The protein belongs to the CEP135/TSGA10 family. Homodimer. Interacts with DCTN2. Interacts with CEP250.

Its subcellular location is the cytoplasm. The protein localises to the cytoskeleton. It is found in the microtubule organizing center. The protein resides in the centrosome. It localises to the centriole. In terms of biological role, centrosomal microtubule-binding protein involved in centriole biogenesis. Acts as a scaffolding protein during early centriole biogenesis. Required for the targeting of centriole satellite proteins to centrosomes such as of PCM1, SSX2IP and CEP290 and recruitment of WRAP73 to centrioles. Also required for centriole-centriole cohesion during interphase by acting as a platform protein for CEP250 at the centriole. Required for the recruitment of CEP295 to the proximal end of new-born centrioles at the centriolar microtubule wall during early S phase in a PLK4-dependent manner. In Homo sapiens (Human), this protein is Centrosomal protein of 135 kDa.